The sequence spans 396 residues: Glideosome-associated protein 50 (396 aa).

Residues 1-369 are Lumenal-facing; the sequence is MNYCKTTFHI…PMGNKDTFVR (369 aa). Residues His-195 and His-256 each coordinate a metal cation. A helical membrane pass occupies residues 370–390; the sequence is VVGTIGILIGSVIVFIGASSF. The Cytoplasmic portion of the chain corresponds to 391–396; the sequence is LSKNMK.

It belongs to the metallophosphoesterase superfamily. Purple acid phosphatase family. As to quaternary structure, component of the glideosome complex composed of GAP50, GAP45, MTIP and MyoA; the complex is formed during the late schizont stage and in merozoites. MyoA, MTIP and GAP45 probably form an initial complex in the cytoplasm which is then recruited to the outer face of the inner membrane complex via the interaction with GAP50. Interacts with GAP45; the interaction is independent of GAP45 phosphorylation status and can also occur independently of the formation of the glideosome complex. Interacts with human factor H isoform CFH (via sushi 6-7 domains) and isoform FHL-1 (via sushi 6-7 domains); the interaction occurs in the vector mosquito midgut at the surface of activated gametocytes; the interaction protects the parasite from alternative complement pathway-mediated elimination. The cofactor is a metal cation. Post-translationally, the N-terminus signal is likely to be cleaved.

The protein resides in the inner membrane complex. The protein localises to the cell membrane. Its subcellular location is the endoplasmic reticulum membrane. It catalyses the reaction a phosphate monoester + H2O = an alcohol + phosphate. Its activity is regulated as follows. Activity is independent of metal ions. In terms of biological role, component of the glideosome complex, an inner membrane complex structure involved in parasite gliding motility and host cell invasion. During the asexual blood stage, may play a role in the assembly and anchoring of the glideosome complex to the inner membrane complex. During the sexual stage in the vector mosquito midgut, protects gametocytes against host alternative complement pathway-mediated elimination by interacting with host complement inhibitor factor H. Has phosphatase activity towards nucleotides such as ATP, vitamins B1 and B6, phosphorylated sugars, glycerol phosphates and inositol triphosphates. However, the phosphatase activity is controversial. The sequence is that of Glideosome-associated protein 50 from Plasmodium falciparum (isolate 3D7).